Consider the following 232-residue polypeptide: 5'-methylthioadenosine/S-adenosylhomocysteine nucleosidase (232 aa).

Glutamate 12 functions as the Proton acceptor in the catalytic mechanism. Residues glycine 78, isoleucine 152, and 173–174 (ME) contribute to the substrate site. Residue aspartate 197 is the Proton donor of the active site.

This sequence belongs to the PNP/UDP phosphorylase family. MtnN subfamily. In terms of assembly, homodimer.

The enzyme catalyses S-adenosyl-L-homocysteine + H2O = S-(5-deoxy-D-ribos-5-yl)-L-homocysteine + adenine. It catalyses the reaction S-methyl-5'-thioadenosine + H2O = 5-(methylsulfanyl)-D-ribose + adenine. The catalysed reaction is 5'-deoxyadenosine + H2O = 5-deoxy-D-ribose + adenine. The protein operates within amino-acid biosynthesis; L-methionine biosynthesis via salvage pathway; S-methyl-5-thio-alpha-D-ribose 1-phosphate from S-methyl-5'-thioadenosine (hydrolase route): step 1/2. Catalyzes the irreversible cleavage of the glycosidic bond in both 5'-methylthioadenosine (MTA) and S-adenosylhomocysteine (SAH/AdoHcy) to adenine and the corresponding thioribose, 5'-methylthioribose and S-ribosylhomocysteine, respectively. Also cleaves 5'-deoxyadenosine, a toxic by-product of radical S-adenosylmethionine (SAM) enzymes, into 5-deoxyribose and adenine. Thus, is required for in vivo function of the radical SAM enzymes biotin synthase and lipoic acid synthase, that are inhibited by 5'-deoxyadenosine accumulation. This chain is 5'-methylthioadenosine/S-adenosylhomocysteine nucleosidase, found in Shigella boydii serotype 4 (strain Sb227).